A 506-amino-acid chain; its full sequence is Tetratricopeptide repeat protein 8 (506 aa).

The interval 83 to 112 (RPGTSFARPKTSAKGVNPILRPTTNAGRPL) is disordered. TPR repeat units follow at residues 217–250 (YYWKNQLAKCYLRLGMLQDATKQLQSSLEQKKLI), 251–283 (ETFALLSKAYNRVDQPMAALKTYSAGLEVFPEN), 284–317 (VTMLTGMARVQEALGEYDESVKLYKRVLDAESNN), 319–351 (EAIACVATTYYYGGKPELAMRYYRRILQMGVSS), 353–385 (ELFLNIGLCCMAAQQFDFALSSILRAQSTMTDD), 388–421 (ADVWYNIGQILVDIGDLVSAARSFRIALSHDPDH), 423–455 (ESLVNLGILKHREGKIDEARSLYSSATSKNPYM), and 456–489 (FEGNYNLGLVSFTQGKYHECRELIEKALAAFPEH).

In terms of assembly, part of BBSome complex, that contains at least bbs-1, bbs-2, bbs-4, bbs-5, osm-12, bbs-8/ttc-8 and bbs-9. In terms of tissue distribution, expressed in head and tail neurons. Expressed in ciliated male tail-neurons. Expressed in thermosensory and CO(2) sensory AFD neurons.

It localises to the cell projection. Its subcellular location is the cilium. The protein localises to the cytoplasm. It is found in the cytoskeleton. The protein resides in the cilium basal body. It localises to the cilium axoneme. In terms of biological role, component of the BBSome complex. The BBSome complex is thought to function as a coat complex required for sorting of specific membrane proteins to the primary cilia. The BBSome complex is required for ciliogenesis but is dispensable for centriolar satellite function. Required for proper BBSome complex assembly and its ciliary localization. Required for cilia biogenesis and both the assembly and movement of intraflagellar transport proteins along the ciliary axoneme. Plays a role in guanylyl cyclase localization in the ring-like structures at the base of the finger compartment in AFD sensory neurons. In Caenorhabditis elegans, this protein is Tetratricopeptide repeat protein 8.